The following is a 3141-amino-acid chain: Genome polyprotein (3141 aa).

Residues R165–Y308 form the Peptidase S30 domain. Active-site for P1 proteinase activity residues include H216, D225, and S259. The short motif at K360–C363 is the Involved in interaction with stylet and aphid transmission element. Residues P619 to K621 carry the Involved in virions binding and aphid transmission motif. The Peptidase C6 domain occupies M645–G767. Residues C653 and H726 each act as for helper component proteinase activity in the active site. Residues E1241–E1393 form the Helicase ATP-binding domain. Position 1254–1261 (G1254–S1261) interacts with ATP. The short motif at D1343–H1346 is the DECH box element. The Helicase C-terminal domain occupies D1412–S1571. The Nuclear localization signal signature appears at K1898–K1905. Y1920 carries the post-translational modification O-(5'-phospho-RNA)-tyrosine. Positions S2051 to R2269 constitute a Peptidase C4 domain. Active-site for nuclear inclusion protein A activity residues include H2096, D2131, and C2201. The RdRp catalytic domain maps to W2535–Y2659. A phosphoserine mark is found at S2836, S2892, S2912, and S2929. Residues T3065 and T3124 each carry the phosphothreonine modification.

Belongs to the potyviridae genome polyprotein family. Interacts with host eIF4E protein (via cap-binding region); this interaction mediates the translation of the VPg-viral RNA conjugates. Part of a complex that comprises VPg, RNA, host EIF4E and EIF4G; this interaction mediates the translation of the VPg-viral RNA conjugates. Interacts with host eIF(iso)4E both in host nucleus and cytoplasm. Post-translationally, VPg is uridylylated by the polymerase and is covalently attached to the 5'-end of the genomic RNA. This uridylylated form acts as a nucleotide-peptide primer for the polymerase. In terms of processing, potyviral RNA is expressed as two polyproteins which undergo post-translational proteolytic processing. Genome polyprotein is processed by NIa-pro, P1 and HC-pro proteinases resulting in the production of at least ten individual proteins. P3N-PIPO polyprotein is cleaved by P1 and HC-pro proteinases resulting in the production of three individual proteins. The P1 proteinase and the HC-pro cleave only their respective C-termini autocatalytically. 6K1 is essential for proper proteolytic separation of P3 from CI.

Its subcellular location is the host cytoplasmic vesicle. The protein localises to the host nucleus. It is found in the host cytoplasm. The protein resides in the virion. The catalysed reaction is RNA(n) + a ribonucleoside 5'-triphosphate = RNA(n+1) + diphosphate. It carries out the reaction Hydrolyzes glutaminyl bonds, and activity is further restricted by preferences for the amino acids in P6 - P1' that vary with the species of potyvirus, e.g. Glu-Xaa-Xaa-Tyr-Xaa-Gln-|-(Ser or Gly) for the enzyme from tobacco etch virus. The natural substrate is the viral polyprotein, but other proteins and oligopeptides containing the appropriate consensus sequence are also cleaved.. The enzyme catalyses Hydrolyzes a Gly-|-Gly bond at its own C-terminus, commonly in the sequence -Tyr-Xaa-Val-Gly-|-Gly, in the processing of the potyviral polyprotein.. Its function is as follows. Required for aphid transmission and also has proteolytic activity. Only cleaves a Gly-Gly dipeptide at its own C-terminus. Interacts with virions and aphid stylets. Acts as a suppressor of RNA-mediated gene silencing, also known as post-transcriptional gene silencing (PTGS), a mechanism of plant viral defense that limits the accumulation of viral RNAs. May have RNA-binding activity. Has helicase activity. It may be involved in replication. Functionally, indispensable for virus replication. Reduces the abundance of host transcripts related to jasmonic acid biosynthesis therefore altering the host defenses. In order to increase its own stability, decreases host protein degradation pathways. In terms of biological role, indispensable for virus replication. Its function is as follows. Mediates the cap-independent, EIF4E-dependent translation of viral genomic RNAs. Binds to the cap-binding site of host EIF4E and thus interferes with the host EIF4E-dependent mRNA export and translation. VPg-RNA directly binds EIF4E and is a template for transcription. Also forms trimeric complexes with EIF4E-EIF4G, which are templates for translation. Has RNA-binding and proteolytic activities. Functionally, an RNA-dependent RNA polymerase that plays an essential role in the virus replication. In terms of biological role, involved in aphid transmission, cell-to-cell and systemis movement, encapsidation of the viral RNA and in the regulation of viral RNA amplification. The protein is Genome polyprotein of Plum pox potyvirus (strain D) (PPV).